The primary structure comprises 199 residues: 5'-deoxynucleotidase ECA3034 (199 aa).

Substrate is bound by residues R18–W19 and H33. The HD domain occupies V30–Y142. A divalent metal cation-binding residues include H33, H68, and D69. Residues D69, D77–T80, and D137 contribute to the substrate site. D137 contributes to the a divalent metal cation binding site.

The protein belongs to the 5DNU family. Homodimer. A divalent metal cation serves as cofactor.

It is found in the cytoplasm. The enzyme catalyses a 2'-deoxyribonucleoside 5'-phosphate + H2O = a 2'-deoxyribonucleoside + phosphate. In terms of biological role, catalyzes the strictly specific dephosphorylation of 2'-deoxyribonucleoside 5'-monophosphates. The polypeptide is 5'-deoxynucleotidase ECA3034 (Pectobacterium atrosepticum (strain SCRI 1043 / ATCC BAA-672) (Erwinia carotovora subsp. atroseptica)).